Here is a 119-residue protein sequence, read N- to C-terminus: Putative membrane protein insertion efficiency factor (119 aa).

Belongs to the UPF0161 family.

Its subcellular location is the cell inner membrane. In terms of biological role, could be involved in insertion of integral membrane proteins into the membrane. The polypeptide is Putative membrane protein insertion efficiency factor (Agrobacterium fabrum (strain C58 / ATCC 33970) (Agrobacterium tumefaciens (strain C58))).